A 618-amino-acid chain; its full sequence is Glutamine--fructose-6-phosphate aminotransferase [isomerizing] (618 aa).

Cys2 acts as the Nucleophile; for GATase activity in catalysis. The Glutamine amidotransferase type-2 domain maps to 2-226 (CGIVGYAGRN…DFETAVLTPD (225 aa)). The interval 72–91 (WATHGRPSTENAHPHNSGGN) is disordered. SIS domains are found at residues 295 to 434 (NDDE…VRGK) and 467 to 608 (CAEN…IDKP). Lys613 functions as the For Fru-6P isomerization activity in the catalytic mechanism.

Homodimer.

It localises to the cytoplasm. The enzyme catalyses D-fructose 6-phosphate + L-glutamine = D-glucosamine 6-phosphate + L-glutamate. Its function is as follows. Catalyzes the first step in hexosamine metabolism, converting fructose-6P into glucosamine-6P using glutamine as a nitrogen source. The sequence is that of Glutamine--fructose-6-phosphate aminotransferase [isomerizing] from Methanosarcina mazei (strain ATCC BAA-159 / DSM 3647 / Goe1 / Go1 / JCM 11833 / OCM 88) (Methanosarcina frisia).